Consider the following 21-residue polypeptide: Formate ester dehydrogenase beta chain (21 aa).

As to quaternary structure, heterotrimer composed of an alpha, a beta and a gamma chain.

This is Formate ester dehydrogenase beta chain from Amycolatopsis methanolica.